We begin with the raw amino-acid sequence, 303 residues long: Methionyl-tRNA formyltransferase (303 aa).

(6S)-5,6,7,8-tetrahydrofolate is bound at residue S109 to P112.

Belongs to the Fmt family.

It carries out the reaction L-methionyl-tRNA(fMet) + (6R)-10-formyltetrahydrofolate = N-formyl-L-methionyl-tRNA(fMet) + (6S)-5,6,7,8-tetrahydrofolate + H(+). Attaches a formyl group to the free amino group of methionyl-tRNA(fMet). The formyl group appears to play a dual role in the initiator identity of N-formylmethionyl-tRNA by promoting its recognition by IF2 and preventing the misappropriation of this tRNA by the elongation apparatus. This is Methionyl-tRNA formyltransferase from Helicobacter pylori (strain ATCC 700392 / 26695) (Campylobacter pylori).